Here is a 405-residue protein sequence, read N- to C-terminus: Deoxyguanosinetriphosphate triphosphohydrolase-like protein (405 aa).

Positions 75–219 constitute an HD domain; it reads RLTHTIEVAQ…AAIADDIAYN (145 aa).

This sequence belongs to the dGTPase family. Type 2 subfamily.

The sequence is that of Deoxyguanosinetriphosphate triphosphohydrolase-like protein from Rhizobium leguminosarum bv. trifolii (strain WSM2304).